Here is a 437-residue protein sequence, read N- to C-terminus: RNA-binding motif, single-stranded-interacting protein 3 (437 aa).

Residues 28-57 form a disordered region; sequence YAPAPHPMAPPSPSTNSSSNNSSNNSSGEQ. Over residues 31–40 the composition is skewed to pro residues; that stretch reads APHPMAPPSP. Residues 41–54 show a composition bias toward low complexity; the sequence is STNSSSNNSSNNSS. RRM domains follow at residues 61-134 and 140-225; these read TNLY…MAKQ and TNLY…FADG. Residues 399 to 422 show a composition bias toward polar residues; it reads TSPQTVAPSSQDTSGQQQQIAVDT. The segment at 399-437 is disordered; the sequence is TSPQTVAPSSQDTSGQQQQIAVDTSNEHAPAYSYQQSKP.

As to expression, expressed in fetal brain, fetal lung, fetal liver, heart, brain, placenta, lung, liver, muscle, kidney and pancreas.

It is found in the cytoplasm. Binds poly(A) and poly(U) oligoribonucleotides. This is RNA-binding motif, single-stranded-interacting protein 3 (RBMS3) from Homo sapiens (Human).